The chain runs to 228 residues: MIGIIGAMEEEILILKEKITDLEEISIAHVKFYKGYIDNQEVVLTLSGIGKVNAAISTTLLINTFSPDVILNTGSAGALDHSLNIGDVLISTEATYHDADATAFGYELGQIPNMPIAYAADDDLVTLAQSVVEQQEMNGKLGLIVSGDSFIGEVSQRETIKTNFPDAMAVEMEATAIAQTCYQFKVPFIITRAVSDLANGEANMTFDEFIGEAAKSSSEIVLEMLKSL.

The active-site Proton acceptor is the glutamate 11. Residues glycine 77, isoleucine 151, and methionine 172–glutamate 173 each bind substrate. The active-site Proton donor is the aspartate 196.

This sequence belongs to the PNP/UDP phosphorylase family. MtnN subfamily.

The catalysed reaction is S-adenosyl-L-homocysteine + H2O = S-(5-deoxy-D-ribos-5-yl)-L-homocysteine + adenine. It catalyses the reaction S-methyl-5'-thioadenosine + H2O = 5-(methylsulfanyl)-D-ribose + adenine. The enzyme catalyses 5'-deoxyadenosine + H2O = 5-deoxy-D-ribose + adenine. The protein operates within amino-acid biosynthesis; L-methionine biosynthesis via salvage pathway; S-methyl-5-thio-alpha-D-ribose 1-phosphate from S-methyl-5'-thioadenosine (hydrolase route): step 1/2. Functionally, catalyzes the irreversible cleavage of the glycosidic bond in both 5'-methylthioadenosine (MTA) and S-adenosylhomocysteine (SAH/AdoHcy) to adenine and the corresponding thioribose, 5'-methylthioribose and S-ribosylhomocysteine, respectively. Also cleaves 5'-deoxyadenosine, a toxic by-product of radical S-adenosylmethionine (SAM) enzymes, into 5-deoxyribose and adenine. The sequence is that of 5'-methylthioadenosine/S-adenosylhomocysteine nucleosidase from Staphylococcus carnosus (strain TM300).